A 196-amino-acid polypeptide reads, in one-letter code: Imidazoleglycerol-phosphate dehydratase (196 aa).

Belongs to the imidazoleglycerol-phosphate dehydratase family.

Its subcellular location is the cytoplasm. The enzyme catalyses D-erythro-1-(imidazol-4-yl)glycerol 3-phosphate = 3-(imidazol-4-yl)-2-oxopropyl phosphate + H2O. The protein operates within amino-acid biosynthesis; L-histidine biosynthesis; L-histidine from 5-phospho-alpha-D-ribose 1-diphosphate: step 6/9. This chain is Imidazoleglycerol-phosphate dehydratase, found in Desulforudis audaxviator (strain MP104C).